A 489-amino-acid chain; its full sequence is Ammonium transporter MEP3 (489 aa).

Over 1–17 (MARGDGHLWTETYDSST) the chain is Extracellular. The helical transmembrane segment at 18 to 38 (VAFMILGAALVFFMVPGLGFL) threads the bilayer. Topologically, residues 39–48 (YSGLARRKSA) are cytoplasmic. A helical membrane pass occupies residues 49–69 (LALIWVVIMATLVGILQWYFW). Residues 70 to 108 (GYSLAFSKTATNNKFIGNLDSFGFRNVYGKISDDSTYPE) are Extracellular-facing. Residues 109–129 (LIYAIFQMMFMCVALSIIAGA) traverse the membrane as a helical segment. Topologically, residues 130 to 139 (TAERGKLFPH) are cytoplasmic. Residues 140–160 (MVFLFVFATLVYCPITYWIWA) traverse the membrane as a helical segment. The Extracellular segment spans residues 161–173 (PGGWAYQWGVLDW). Residues 174 to 194 (AGGGNIEILSAVAGFVYSYFL) form a helical membrane-spanning segment. Residues 195 to 209 (GRRKENLLINFRPHN) are Cytoplasmic-facing. The chain crosses the membrane as a helical span at residues 210–230 (VSMVTLGTSILWFGWLLFNAA). The Extracellular segment spans residues 231 to 239 (SSLSPNMRS). The helical transmembrane segment at 240–260 (VYAFMNTCLSATTGGMTWCLL) threads the bilayer. Residues 261-267 (DYRSEKK) lie on the Cytoplasmic side of the membrane. The chain crosses the membrane as a helical span at residues 268-288 (WSTVGLCSGIICGLVAATPSS). Position 289 (Gly289) is a topological domain, extracellular. Residues 290–310 (CITLYGSLIQGIIAGVVCNFA) traverse the membrane as a helical segment. Residues 311-330 (TKIKYYLKVDDSLDLLAEHG) lie on the Cytoplasmic side of the membrane. Residues 331-351 (IAGVVGLIFNALFAADWVIGM) form a helical membrane-spanning segment. Topologically, residues 352–372 (DGTTKHKGGWLTHNWKQMYIQ) are extracellular. Residues 373–393 (IAYIGASAGYCAVVTAIICFV) form a helical membrane-spanning segment. The Cytoplasmic portion of the chain corresponds to 394-489 (LGKIPGVHLR…NPKLHHAKEA (96 aa)). The span at 448-481 (GANSASETNPTEDSQNSSLSSATVSGQNEKSNNP) shows a compositional bias: polar residues. The tract at residues 448 to 489 (GANSASETNPTEDSQNSSLSSATVSGQNEKSNNPKLHHAKEA) is disordered.

It belongs to the ammonia transporter channel (TC 1.A.11.2) family.

It localises to the membrane. Transporter for ammonium (both charged and uncharged NH3 and NH4) to use as a nitrogen source. The affinity of MEP2 is about twenty times higher than that of MEP1. MEP3 has the lowest affinity. The polypeptide is Ammonium transporter MEP3 (MEP3) (Saccharomyces cerevisiae (strain ATCC 204508 / S288c) (Baker's yeast)).